The sequence spans 192 residues: Peptidyl-tRNA hydrolase (192 aa).

Tyrosine 14 contributes to the tRNA binding site. Histidine 19 acts as the Proton acceptor in catalysis. Tyrosine 64, asparagine 66, and asparagine 112 together coordinate tRNA.

The protein belongs to the PTH family. As to quaternary structure, monomer.

It localises to the cytoplasm. The catalysed reaction is an N-acyl-L-alpha-aminoacyl-tRNA + H2O = an N-acyl-L-amino acid + a tRNA + H(+). Functionally, hydrolyzes ribosome-free peptidyl-tRNAs (with 1 or more amino acids incorporated), which drop off the ribosome during protein synthesis, or as a result of ribosome stalling. Catalyzes the release of premature peptidyl moieties from peptidyl-tRNA molecules trapped in stalled 50S ribosomal subunits, and thus maintains levels of free tRNAs and 50S ribosomes. This Anaeromyxobacter sp. (strain K) protein is Peptidyl-tRNA hydrolase.